Consider the following 414-residue polypeptide: Glutamyl-tRNA reductase (414 aa).

Residues 49–52 (TCNR), Ser108, 113–115 (EPQ), and Gln119 contribute to the substrate site. Cys50 serves as the catalytic Nucleophile. Residue 188–193 (GAGQTG) participates in NADP(+) binding.

It belongs to the glutamyl-tRNA reductase family. As to quaternary structure, homodimer.

It carries out the reaction (S)-4-amino-5-oxopentanoate + tRNA(Glu) + NADP(+) = L-glutamyl-tRNA(Glu) + NADPH + H(+). The protein operates within porphyrin-containing compound metabolism; protoporphyrin-IX biosynthesis; 5-aminolevulinate from L-glutamyl-tRNA(Glu): step 1/2. Functionally, catalyzes the NADPH-dependent reduction of glutamyl-tRNA(Glu) to glutamate 1-semialdehyde (GSA). This Francisella tularensis subsp. tularensis (strain WY96-3418) protein is Glutamyl-tRNA reductase.